The chain runs to 37 residues: Cytochrome b6-f complex subunit 5 (37 aa).

Residues 5-25 traverse the membrane as a helical segment; the sequence is LLSGIVLGLVPVTIAGLFVTA.

Belongs to the PetG family. In terms of assembly, the 4 large subunits of the cytochrome b6-f complex are cytochrome b6, subunit IV (17 kDa polypeptide, PetD), cytochrome f and the Rieske protein, while the 4 small subunits are PetG, PetL, PetM and PetN. The complex functions as a dimer.

Its subcellular location is the plastid. It is found in the chloroplast thylakoid membrane. Its function is as follows. Component of the cytochrome b6-f complex, which mediates electron transfer between photosystem II (PSII) and photosystem I (PSI), cyclic electron flow around PSI, and state transitions. PetG is required for either the stability or assembly of the cytochrome b6-f complex. The chain is Cytochrome b6-f complex subunit 5 from Stigeoclonium helveticum (Green alga).